A 167-amino-acid polypeptide reads, in one-letter code: Peptide deformylase (167 aa).

Positions 90 and 132 each coordinate Fe cation. Residue glutamate 133 is part of the active site. Histidine 136 contacts Fe cation.

Belongs to the polypeptide deformylase family. Requires Fe(2+) as cofactor.

It carries out the reaction N-terminal N-formyl-L-methionyl-[peptide] + H2O = N-terminal L-methionyl-[peptide] + formate. Removes the formyl group from the N-terminal Met of newly synthesized proteins. Requires at least a dipeptide for an efficient rate of reaction. N-terminal L-methionine is a prerequisite for activity but the enzyme has broad specificity at other positions. This chain is Peptide deformylase, found in Dehalococcoides mccartyi (strain ATCC BAA-2100 / JCM 16839 / KCTC 5957 / BAV1).